Reading from the N-terminus, the 561-residue chain is Nucleoprotein (561 aa).

The segment at 52–237 (VRKDKRTDSD…ISHEPSALNI (186 aa)) is binding site for the cap structure m7GTP. A disordered region spans residues 336 to 355 (SKPSAIQPPVRNGGSPDLKQ). Mn(2+) contacts are provided by Asp-380 and Glu-382. 4 residues coordinate Zn(2+): Glu-390, Cys-497, His-500, and Cys-521. Asp-525 contacts Mn(2+).

Belongs to the arenaviridae nucleocapsid protein family. As to quaternary structure, homomultimerizes to form the nucleocapsid. Binds to viral genomic RNA. Interacts with glycoprotein G2. Interacts with protein Z; this interaction probably directs the encapsidated genome to budding sites. Interacts with protein L; this interaction does not interfere with Z-L interaction. Interacts with host IKBKE (via Protein kinase domain); the interaction inhibits IKBKE kinase activity.

Its subcellular location is the virion. The protein resides in the host cytoplasm. In terms of biological role, encapsidates the genome, protecting it from nucleases. The encapsidated genomic RNA is termed the nucleocapsid (NC). Serves as template for viral transcription and replication. The increased presence of protein N in host cell does not seem to trigger the switch from transcription to replication as observed in other negative strain RNA viruses. Through the interaction with host IKBKE, strongly inhibits the phosphorylation and nuclear translocation of host IRF3, a protein involved in interferon activation pathway, leading to the inhibition of interferon-beta and IRF3-dependent promoters activation. Also encodes a functional 3'-5' exoribonuclease that degrades preferentially dsRNA substrates and thereby participates in the suppression of interferon induction. This is Nucleoprotein from Cavia cutleri (Guinea pig).